Here is a 190-residue protein sequence, read N- to C-terminus: Probable chorismate pyruvate-lyase (190 aa).

Residues arginine 74, leucine 112, and glutamate 173 each contribute to the substrate site.

The protein belongs to the UbiC family.

The protein resides in the cytoplasm. The catalysed reaction is chorismate = 4-hydroxybenzoate + pyruvate. It participates in cofactor biosynthesis; ubiquinone biosynthesis. In terms of biological role, removes the pyruvyl group from chorismate, with concomitant aromatization of the ring, to provide 4-hydroxybenzoate (4HB) for the ubiquinone pathway. The protein is Probable chorismate pyruvate-lyase of Bordetella bronchiseptica (strain ATCC BAA-588 / NCTC 13252 / RB50) (Alcaligenes bronchisepticus).